We begin with the raw amino-acid sequence, 238 residues long: tRNA (guanine-N(1)-)-methyltransferase (238 aa).

132 to 137 (IGDYVL) is a binding site for S-adenosyl-L-methionine.

Belongs to the RNA methyltransferase TrmD family. As to quaternary structure, homodimer.

The protein localises to the cytoplasm. The catalysed reaction is guanosine(37) in tRNA + S-adenosyl-L-methionine = N(1)-methylguanosine(37) in tRNA + S-adenosyl-L-homocysteine + H(+). Functionally, specifically methylates guanosine-37 in various tRNAs. This chain is tRNA (guanine-N(1)-)-methyltransferase, found in Nitrobacter hamburgensis (strain DSM 10229 / NCIMB 13809 / X14).